Here is a 208-residue protein sequence, read N- to C-terminus: Uracil phosphoribosyltransferase (208 aa).

5-phospho-alpha-D-ribose 1-diphosphate is bound by residues Arg-78, Arg-103, and 130–138; that span reads DPMLATGGS. Residues Ile-193 and 198–200 each bind uracil; that span reads GDA. Asp-199 provides a ligand contact to 5-phospho-alpha-D-ribose 1-diphosphate.

Belongs to the UPRTase family. It depends on Mg(2+) as a cofactor.

The catalysed reaction is UMP + diphosphate = 5-phospho-alpha-D-ribose 1-diphosphate + uracil. It functions in the pathway pyrimidine metabolism; UMP biosynthesis via salvage pathway; UMP from uracil: step 1/1. Its activity is regulated as follows. Allosterically activated by GTP. Catalyzes the conversion of uracil and 5-phospho-alpha-D-ribose 1-diphosphate (PRPP) to UMP and diphosphate. In Pectobacterium atrosepticum (strain SCRI 1043 / ATCC BAA-672) (Erwinia carotovora subsp. atroseptica), this protein is Uracil phosphoribosyltransferase.